We begin with the raw amino-acid sequence, 455 residues long: Bifunctional protein GlmU (455 aa).

A pyrophosphorylase region spans residues 1–226 (MSLEIVILAA…PMEVQGANDR (226 aa)). Residues 8 to 11 (LAAG), Lys22, Gln73, 78 to 79 (GT), 99 to 101 (YGD), Gly136, Glu151, Asn166, and Asn224 each bind UDP-N-acetyl-alpha-D-glucosamine. Mg(2+) is bound at residue Asp101. Mg(2+) is bound at residue Asn224. Positions 227–247 (KQLSELERHYQLRAGRRLMAQ) are linker. The interval 248-455 (GVTLRDPARF…WKRPEKIKKN (208 aa)) is N-acetyltransferase. UDP-N-acetyl-alpha-D-glucosamine contacts are provided by Arg330 and Lys348. The active-site Proton acceptor is His360. UDP-N-acetyl-alpha-D-glucosamine is bound by residues Tyr363 and Asn374. Acetyl-CoA-binding positions include Ala377, 383–384 (NY), Ser402, Ala420, and Arg437.

This sequence in the N-terminal section; belongs to the N-acetylglucosamine-1-phosphate uridyltransferase family. The protein in the C-terminal section; belongs to the transferase hexapeptide repeat family. Homotrimer. Mg(2+) serves as cofactor.

The protein localises to the cytoplasm. The catalysed reaction is alpha-D-glucosamine 1-phosphate + acetyl-CoA = N-acetyl-alpha-D-glucosamine 1-phosphate + CoA + H(+). It catalyses the reaction N-acetyl-alpha-D-glucosamine 1-phosphate + UTP + H(+) = UDP-N-acetyl-alpha-D-glucosamine + diphosphate. The protein operates within nucleotide-sugar biosynthesis; UDP-N-acetyl-alpha-D-glucosamine biosynthesis; N-acetyl-alpha-D-glucosamine 1-phosphate from alpha-D-glucosamine 6-phosphate (route II): step 2/2. Its pathway is nucleotide-sugar biosynthesis; UDP-N-acetyl-alpha-D-glucosamine biosynthesis; UDP-N-acetyl-alpha-D-glucosamine from N-acetyl-alpha-D-glucosamine 1-phosphate: step 1/1. It participates in bacterial outer membrane biogenesis; LPS lipid A biosynthesis. In terms of biological role, catalyzes the last two sequential reactions in the de novo biosynthetic pathway for UDP-N-acetylglucosamine (UDP-GlcNAc). The C-terminal domain catalyzes the transfer of acetyl group from acetyl coenzyme A to glucosamine-1-phosphate (GlcN-1-P) to produce N-acetylglucosamine-1-phosphate (GlcNAc-1-P), which is converted into UDP-GlcNAc by the transfer of uridine 5-monophosphate (from uridine 5-triphosphate), a reaction catalyzed by the N-terminal domain. This is Bifunctional protein GlmU from Pseudomonas fluorescens (strain Pf0-1).